A 136-amino-acid chain; its full sequence is SLSHGEGKNAFYALGSGPARALATKVKDGNEEPVEELYKELGYRDHSNETAIVMEVDKVPPVEVIEKIAKACKVDASGVHVILTPTSSLAGGMQVVGRVLEVALHKAHSLHFPLGNIIDGTGTAPVPPPHPNFVKA.

Belongs to the MCH family.

Its subcellular location is the cytoplasm. It carries out the reaction 5,10-methenyl-5,6,7,8-tetrahydromethanopterin + H2O = N(5)-formyl-5,6,7,8-tetrahydromethanopterin + H(+). It participates in one-carbon metabolism; formaldehyde degradation; formate from formaldehyde (H(4)MPT route): step 3/5. Its function is as follows. Catalyzes the hydrolysis of methenyl-H(4)MPT(+) to 5-formyl-H(4)MPT. The sequence is that of Methenyltetrahydromethanopterin cyclohydrolase (mch) from Methylococcus thermophilus.